A 293-amino-acid chain; its full sequence is 4-hydroxy-tetrahydrodipicolinate synthase (293 aa).

Residue T45 participates in pyruvate binding. Residue Y133 is the Proton donor/acceptor of the active site. The Schiff-base intermediate with substrate role is filled by K161. I203 is a pyruvate binding site.

This sequence belongs to the DapA family. In terms of assembly, homotetramer; dimer of dimers.

Its subcellular location is the cytoplasm. It catalyses the reaction L-aspartate 4-semialdehyde + pyruvate = (2S,4S)-4-hydroxy-2,3,4,5-tetrahydrodipicolinate + H2O + H(+). It participates in amino-acid biosynthesis; L-lysine biosynthesis via DAP pathway; (S)-tetrahydrodipicolinate from L-aspartate: step 3/4. In terms of biological role, catalyzes the condensation of (S)-aspartate-beta-semialdehyde [(S)-ASA] and pyruvate to 4-hydroxy-tetrahydrodipicolinate (HTPA). The polypeptide is 4-hydroxy-tetrahydrodipicolinate synthase (Pseudoalteromonas atlantica (strain T6c / ATCC BAA-1087)).